Reading from the N-terminus, the 393-residue chain is Phosphopentomutase (393 aa).

Mn(2+) contacts are provided by D13, D286, H291, D327, H328, and H339.

Belongs to the phosphopentomutase family. The cofactor is Mn(2+).

It is found in the cytoplasm. The enzyme catalyses 2-deoxy-alpha-D-ribose 1-phosphate = 2-deoxy-D-ribose 5-phosphate. It catalyses the reaction alpha-D-ribose 1-phosphate = D-ribose 5-phosphate. The protein operates within carbohydrate degradation; 2-deoxy-D-ribose 1-phosphate degradation; D-glyceraldehyde 3-phosphate and acetaldehyde from 2-deoxy-alpha-D-ribose 1-phosphate: step 1/2. Isomerase that catalyzes the conversion of deoxy-ribose 1-phosphate (dRib-1-P) and ribose 1-phosphate (Rib-1-P) to deoxy-ribose 5-phosphate (dRib-5-P) and ribose 5-phosphate (Rib-5-P), respectively. The sequence is that of Phosphopentomutase from Symbiobacterium thermophilum (strain DSM 24528 / JCM 14929 / IAM 14863 / T).